We begin with the raw amino-acid sequence, 97 residues long: UPF0298 protein MGAS9429_Spy0329 (97 aa).

Belongs to the UPF0298 family.

The protein resides in the cytoplasm. The protein is UPF0298 protein MGAS9429_Spy0329 of Streptococcus pyogenes serotype M12 (strain MGAS9429).